The primary structure comprises 132 residues: Small ribosomal subunit protein uS8 (132 aa).

The protein belongs to the universal ribosomal protein uS8 family. In terms of assembly, part of the 30S ribosomal subunit. Contacts proteins S5 and S12.

Its function is as follows. One of the primary rRNA binding proteins, it binds directly to 16S rRNA central domain where it helps coordinate assembly of the platform of the 30S subunit. This chain is Small ribosomal subunit protein uS8, found in Xanthomonas euvesicatoria pv. vesicatoria (strain 85-10) (Xanthomonas campestris pv. vesicatoria).